Here is a 748-residue protein sequence, read N- to C-terminus: Phytochrome-like protein Cph1 (748 aa).

The region spanning 19–86 (AIHTAHLIQP…IQSRLTAGQI (68 aa)) is the PAS domain. The interval 87–510 (SSLNPSKLWA…KKAIVNLILR (424 aa)) is chromophore binding domain. In terms of domain architecture, GAF spans 152-320 (NLRDFYDVIV…VVFSNISAQE (169 aa)). Residue cysteine 259 participates in a tetrapyrrole binding. The 214-residue stretch at 535 to 748 (IASHDLQEPL…TFYFSIPIGN (214 aa)) folds into the Histidine kinase domain. Histidine 538 bears the Phosphohistidine; by autocatalysis mark.

The protein in the N-terminal section; belongs to the phytochrome family. As to quaternary structure, homodimer. In terms of processing, contains one covalently linked tetrapyrrole chromophore.

The enzyme catalyses ATP + protein L-histidine = ADP + protein N-phospho-L-histidine.. Functionally, regulatory photoreceptor which exists in two forms that are reversibly interconvertible by light: the R form that absorbs maximally in the red region of the spectrum and the FR form that absorbs maximally in the far-red region. Also has a slight blue shift for the far-red maximum. Forms a two-component system with the Rrcp1 response regulator. This is Phytochrome-like protein Cph1 (cph1) from Synechocystis sp. (strain ATCC 27184 / PCC 6803 / Kazusa).